A 280-amino-acid chain; its full sequence is 3-methyl-2-oxobutanoate hydroxymethyltransferase (280 aa).

2 residues coordinate Mg(2+): Asp60 and Asp99. 3-methyl-2-oxobutanoate contacts are provided by residues 60–61 (DS), Asp99, and Lys129. Residue Glu131 participates in Mg(2+) binding. The Proton acceptor role is filled by Glu198.

It belongs to the PanB family. In terms of assembly, homodecamer; pentamer of dimers. Requires Mg(2+) as cofactor.

The protein resides in the cytoplasm. It carries out the reaction 3-methyl-2-oxobutanoate + (6R)-5,10-methylene-5,6,7,8-tetrahydrofolate + H2O = 2-dehydropantoate + (6S)-5,6,7,8-tetrahydrofolate. It functions in the pathway cofactor biosynthesis; (R)-pantothenate biosynthesis; (R)-pantoate from 3-methyl-2-oxobutanoate: step 1/2. In terms of biological role, catalyzes the reversible reaction in which hydroxymethyl group from 5,10-methylenetetrahydrofolate is transferred onto alpha-ketoisovalerate to form ketopantoate. In Thermobifida fusca (strain YX), this protein is 3-methyl-2-oxobutanoate hydroxymethyltransferase.